A 655-amino-acid polypeptide reads, in one-letter code: MYNAISLIIILPCISWLFPLFFGRQLGYVFVTRMTSTLIIITTLITYYYFYQLLGNNNPINLELFNYLNIDYLDINYNFEIDALTITMLLAITTISSMVHIYSIGYMETDPHQVRFFSLLSMFTFWMIILVTGSNYFVLFVGWEFIGVTSYLLISFWVTRLQAMKSALSAVLMNRFGDAFFVLGLCVIAYVFGTLNYSTIFATAYLINTDLLVLIMLALFIAAMAKSAQFGLHNWLTLAMEGPTPVSSLLHAATLVTAGIYLLLRSANILEYTPTVLFIILWIGALTTLSAGLIAICSNDLKRIIALSTMSQLGMMTIAIGLSAYNLALFHLLGHAFFKALLFMSAGSIIHSILNESQDIRTYGGLLSYLPYTYICITIASLSLMAMPGLTGYYTKDIIIESTYGSYSISNYVVYWIAYLSAVLTCVYSMKILYLTFYSNPNNNTITYYNAHESNIYITLPMFILAIFAMFAGWILKDIYLGVGTDFVGTHILPNNFSYFDTEFSITQFYKLLPLISAILVSILIVVLNEFFAIVFNLNNKYINTVYSIFNQKLVSDQILNHFIIFKGLVTSGNIAHHVDKGSLYRLGPVGINRLLNKASYNVINLSSNTRSSLSMNSMLILITIVSLLLLVLVMNVNFIIVIPVLISILYILFS.

16 consecutive transmembrane segments (helical) span residues 3-23 (NAISLIIILPCISWLFPLFFG), 34-54 (MTSTLIIITTLITYYYFYQLL), 84-104 (LTITMLLAITTISSMVHIYSI), 116-136 (FFSLLSMFTFWMIILVTGSNY), 137-157 (FVLFVGWEFIGVTSYLLISFW), 180-200 (FFVLGLCVIAYVFGTLNYSTI), 204-224 (AYLINTDLLVLIMLALFIAAM), 244-264 (TPVSSLLHAATLVTAGIYLLL), 276-296 (VLFIILWIGALTTLSAGLIAI), 304-322 (IIALSTMSQLGMMTIAIGL), 332-354 (LLGHAFFKALLFMSAGSIIHSIL), 370-390 (LPYTYICITIASLSLMAMPGL), 413-433 (VVYWIAYLSAVLTCVYSMKIL), 456-476 (IYITLPMFILAIFAMFAGWIL), 516-536 (ISAILVSILIVVLNEFFAIVF), and 629-649 (LLLVLVMNVNFIIVIPVLISI).

Belongs to the complex I subunit 5 family. As to quaternary structure, complex I is composed of 37 different subunits.

The protein resides in the mitochondrion inner membrane. The enzyme catalyses a ubiquinone + NADH + 5 H(+)(in) = a ubiquinol + NAD(+) + 4 H(+)(out). Its function is as follows. Core subunit of the mitochondrial membrane respiratory chain NADH dehydrogenase (Complex I) that is believed to belong to the minimal assembly required for catalysis. Complex I functions in the transfer of electrons from NADH to the respiratory chain. The immediate electron acceptor for the enzyme is believed to be ubiquinone. The chain is NADH-ubiquinone oxidoreductase chain 5 (ND5) from Yarrowia lipolytica (strain CLIB 122 / E 150) (Yeast).